A 90-amino-acid polypeptide reads, in one-letter code: U7-theraphotoxin-Hhn1l (90 aa).

The first 19 residues, 1 to 19, serve as a signal peptide directing secretion; sequence MKTAIFTVVLALAVFAVLS. Residues 20 to 50 constitute a propeptide that is removed on maturation; that stretch reads FGWEANEKALSEEFTELIHEKEAASETEARE. 3 cysteine pairs are disulfide-bonded: cysteine 51–cysteine 65, cysteine 58–cysteine 70, and cysteine 64–cysteine 81.

It belongs to the neurotoxin 10 (Hwtx-1) family. 13 (Hntx-13) subfamily. As to expression, expressed by the venom gland.

It localises to the secreted. In terms of biological role, ion channel inhibitor. This chain is U7-theraphotoxin-Hhn1l, found in Cyriopagopus hainanus (Chinese bird spider).